A 130-amino-acid chain; its full sequence is Small ribosomal subunit protein uS11 (130 aa).

Belongs to the universal ribosomal protein uS11 family. As to quaternary structure, part of the 30S ribosomal subunit. Interacts with proteins S7 and S18. Binds to IF-3.

Located on the platform of the 30S subunit, it bridges several disparate RNA helices of the 16S rRNA. Forms part of the Shine-Dalgarno cleft in the 70S ribosome. The protein is Small ribosomal subunit protein uS11 of Campylobacter hominis (strain ATCC BAA-381 / DSM 21671 / CCUG 45161 / LMG 19568 / NCTC 13146 / CH001A).